The primary structure comprises 355 residues: RNA 3'-terminal phosphate cyclase (355 aa).

ATP contacts are provided by residues Q109 and 291–295 (HLADQ). The active-site Tele-AMP-histidine intermediate is H316.

This sequence belongs to the RNA 3'-terminal cyclase family. Type 1 subfamily.

It is found in the cytoplasm. It catalyses the reaction a 3'-end 3'-phospho-ribonucleotide-RNA + ATP = a 3'-end 2',3'-cyclophospho-ribonucleotide-RNA + AMP + diphosphate. Functionally, catalyzes the conversion of 3'-phosphate to a 2',3'-cyclic phosphodiester at the end of RNA. The mechanism of action of the enzyme occurs in 3 steps: (A) adenylation of the enzyme by ATP; (B) transfer of adenylate to an RNA-N3'P to produce RNA-N3'PP5'A; (C) and attack of the adjacent 2'-hydroxyl on the 3'-phosphorus in the diester linkage to produce the cyclic end product. The biological role of this enzyme is unknown but it is likely to function in some aspects of cellular RNA processing. This chain is RNA 3'-terminal phosphate cyclase, found in Koribacter versatilis (strain Ellin345).